A 152-amino-acid polypeptide reads, in one-letter code: MDSKVVIYTDGACSGNPGPGGWGALLKFNDASKKIFGYELVTTNNRMEMTAALEALRVLKKSSIVEIYTDSKYLQHGITVWIHNWMKNNWCKNNNEPVKNVDLWQKLYSELSKHTIMWRWVKGHASNSGNIAADKLAVQGRETAMEILKCRG.

Residues 1 to 142 (MDSKVVIYTD…ADKLAVQGRE (142 aa)) form the RNase H type-1 domain. The Mg(2+) site is built by D10, E48, D70, and D134.

This sequence belongs to the RNase H family. As to quaternary structure, monomer. Mg(2+) serves as cofactor.

Its subcellular location is the cytoplasm. The catalysed reaction is Endonucleolytic cleavage to 5'-phosphomonoester.. Functionally, endonuclease that specifically degrades the RNA of RNA-DNA hybrids. The chain is Ribonuclease H from Rickettsia typhi (strain ATCC VR-144 / Wilmington).